The following is a 408-amino-acid chain: Tyrosine--tRNA ligase (408 aa).

Tyr35 contacts L-tyrosine. The 'HIGH' region motif lies at 40-49 (PTADSLHVGH). Residues Tyr168 and Gln172 each contribute to the L-tyrosine site. The short motif at 228 to 232 (KMGKT) is the 'KMSKS' region element. Lys231 lines the ATP pocket. Positions 342-407 (INIIDLLLKT…GKKTYHRVKL (66 aa)) constitute an S4 RNA-binding domain.

It belongs to the class-I aminoacyl-tRNA synthetase family. TyrS type 1 subfamily. As to quaternary structure, homodimer.

Its subcellular location is the cytoplasm. It carries out the reaction tRNA(Tyr) + L-tyrosine + ATP = L-tyrosyl-tRNA(Tyr) + AMP + diphosphate + H(+). In terms of biological role, catalyzes the attachment of tyrosine to tRNA(Tyr) in a two-step reaction: tyrosine is first activated by ATP to form Tyr-AMP and then transferred to the acceptor end of tRNA(Tyr). The sequence is that of Tyrosine--tRNA ligase from Acetivibrio thermocellus (strain ATCC 27405 / DSM 1237 / JCM 9322 / NBRC 103400 / NCIMB 10682 / NRRL B-4536 / VPI 7372) (Clostridium thermocellum).